The chain runs to 110 residues: PCNA-associated factor (110 aa).

A Glycyl lysine isopeptide (Lys-Gly) (interchain with G-Cter in ubiquitin) cross-link involves residue Lys-15. The D-box motif lies at 23–34 (RKVLGSSTFVTN). Lys-24 bears the N6-acetyllysine; alternate mark. A Glycyl lysine isopeptide (Lys-Gly) (interchain with G-Cter in ubiquitin); alternate cross-link involves residue Lys-24. Ser-28 is subject to Phosphoserine. Over residues 29-39 (STFVTNSSGSS) the composition is skewed to low complexity. The disordered stretch occupies residues 29 to 110 (STFVTNSSGS…QPDHRDDENE (82 aa)). A PIP-box motif is present at residues 61–71 (QKGIGEFFRLS). Ser-71 is modified (phosphoserine). Residues 71 to 80 (SPKDSKKENQ) are compositionally biased toward basic and acidic residues. Residues 77–79 (KEN) carry the KEN box motif. The short motif at 84–96 (EAGSSGLGKAKRK) is the Initiation motif element.

Interacts (when monoubiquitinated at Lys-15 and Lys-24) with PCNA. Interacts with isoform 2/p33ING1b of ING1. Interacts with BRCA1. Post-translationally, monoubiquitinated at Lys-15 and Lys-24 during normal S phase, promoting its association with PCNA. Also diubiquitinated at these 2 sites. Following DNA damage, monoubiquitin chains at Lys-15 and Lys-24 are probably extended, leading to disrupt the interaction with PCNA. Polyubiquitinated by the APC/C complex at the mitotic exit, leading to its degradation by the proteasome.

It localises to the nucleus. The protein localises to the cytoplasm. It is found in the perinuclear region. In terms of biological role, PCNA-binding protein that acts as a regulator of DNA repair during DNA replication. Following DNA damage, the interaction with PCNA is disrupted, facilitating the interaction between monoubiquitinated PCNA and the translesion DNA synthesis DNA polymerase eta (POLH) at stalled replisomes, facilitating the bypass of replication-fork-blocking lesions. Also acts as a regulator of centrosome number. This Rattus norvegicus (Rat) protein is PCNA-associated factor.